Consider the following 75-residue polypeptide: Small ribosomal subunit protein bS16 (75 aa).

This sequence belongs to the bacterial ribosomal protein bS16 family.

The chain is Small ribosomal subunit protein bS16 from Campylobacter hominis (strain ATCC BAA-381 / DSM 21671 / CCUG 45161 / LMG 19568 / NCTC 13146 / CH001A).